Reading from the N-terminus, the 184-residue chain is MSDIIKDAEKKMGSAVDHAREEFAAIRTGRANPAMFNKLMVEYYGTPTPLQQLASFQVPEARTVLIAPFDKSCVNDVEKAIRDSDLGVNPSNDGNVVRCVLPALTEERRKEYIKMAKTKAEEGRIAVRNVRRASNDVVKKQEKDKEISEDEMTRLEKELDQVTRKYVEQIDELLKSKESELLEI.

This sequence belongs to the RRF family.

It is found in the cytoplasm. Responsible for the release of ribosomes from messenger RNA at the termination of protein biosynthesis. May increase the efficiency of translation by recycling ribosomes from one round of translation to another. In Cutibacterium acnes (strain DSM 16379 / KPA171202) (Propionibacterium acnes), this protein is Ribosome-recycling factor.